Reading from the N-terminus, the 295-residue chain is uncharacterized protein (295 aa).

Positions 1 to 19 are cleaved as a signal peptide; the sequence is MHKLLLIITVFSTFNVAQA.

This is an uncharacterized protein from Rickettsia typhi (strain ATCC VR-144 / Wilmington).